The primary structure comprises 61 residues: Large ribosomal subunit protein eL24 (61 aa).

Residues cysteine 7, cysteine 10, cysteine 33, and cysteine 37 each coordinate Zn(2+). A C4-type zinc finger spans residues 7–37; the sequence is CSFCGHEIPPGTGLMYVRNDGTILWFCSSKC.

This sequence belongs to the eukaryotic ribosomal protein eL24 family. As to quaternary structure, part of the 50S ribosomal subunit. Forms a cluster with proteins L3 and L14. The cofactor is Zn(2+).

In terms of biological role, binds to the 23S rRNA. The polypeptide is Large ribosomal subunit protein eL24 (Saccharolobus islandicus (strain Y.N.15.51 / Yellowstone #2) (Sulfolobus islandicus)).